Consider the following 89-residue polypeptide: Small ribosomal subunit protein uS15 (89 aa).

Belongs to the universal ribosomal protein uS15 family. As to quaternary structure, part of the 30S ribosomal subunit. Forms a bridge to the 50S subunit in the 70S ribosome, contacting the 23S rRNA.

Its function is as follows. One of the primary rRNA binding proteins, it binds directly to 16S rRNA where it helps nucleate assembly of the platform of the 30S subunit by binding and bridging several RNA helices of the 16S rRNA. Functionally, forms an intersubunit bridge (bridge B4) with the 23S rRNA of the 50S subunit in the ribosome. The chain is Small ribosomal subunit protein uS15 from Methylorubrum extorquens (strain CM4 / NCIMB 13688) (Methylobacterium extorquens).